Consider the following 220-residue polypeptide: UPF0319 protein YccT (220 aa).

The N-terminal stretch at 1-20 (MKTGALATFLALCLPVTVFA) is a signal peptide.

Belongs to the UPF0319 family.

The polypeptide is UPF0319 protein YccT (Salmonella agona (strain SL483)).